The following is a 342-amino-acid chain: Holliday junction branch migration complex subunit RuvB (342 aa).

The tract at residues 1-182 (MRIEALNTAP…FGINSRLDYY (182 aa)) is large ATPase domain (RuvB-L). Residues isoleucine 21, arginine 22, glycine 63, lysine 66, threonine 67, threonine 68, 129 to 131 (EDY), arginine 172, tyrosine 182, and arginine 219 contribute to the ATP site. Position 67 (threonine 67) interacts with Mg(2+). Positions 183 to 253 (SPELLQSIIV…VARRTLESLE (71 aa)) are small ATPAse domain (RuvB-S). The interval 256-342 (EGGLDDMDKK…DHGPLFDHNS (87 aa)) is head domain (RuvB-H). Arginine 311 and arginine 316 together coordinate DNA.

It belongs to the RuvB family. In terms of assembly, homohexamer. Forms an RuvA(8)-RuvB(12)-Holliday junction (HJ) complex. HJ DNA is sandwiched between 2 RuvA tetramers; dsDNA enters through RuvA and exits via RuvB. An RuvB hexamer assembles on each DNA strand where it exits the tetramer. Each RuvB hexamer is contacted by two RuvA subunits (via domain III) on 2 adjacent RuvB subunits; this complex drives branch migration. In the full resolvosome a probable DNA-RuvA(4)-RuvB(12)-RuvC(2) complex forms which resolves the HJ.

It localises to the cytoplasm. It carries out the reaction ATP + H2O = ADP + phosphate + H(+). In terms of biological role, the RuvA-RuvB-RuvC complex processes Holliday junction (HJ) DNA during genetic recombination and DNA repair, while the RuvA-RuvB complex plays an important role in the rescue of blocked DNA replication forks via replication fork reversal (RFR). RuvA specifically binds to HJ cruciform DNA, conferring on it an open structure. The RuvB hexamer acts as an ATP-dependent pump, pulling dsDNA into and through the RuvAB complex. RuvB forms 2 homohexamers on either side of HJ DNA bound by 1 or 2 RuvA tetramers; 4 subunits per hexamer contact DNA at a time. Coordinated motions by a converter formed by DNA-disengaged RuvB subunits stimulates ATP hydrolysis and nucleotide exchange. Immobilization of the converter enables RuvB to convert the ATP-contained energy into a lever motion, pulling 2 nucleotides of DNA out of the RuvA tetramer per ATP hydrolyzed, thus driving DNA branch migration. The RuvB motors rotate together with the DNA substrate, which together with the progressing nucleotide cycle form the mechanistic basis for DNA recombination by continuous HJ branch migration. Branch migration allows RuvC to scan DNA until it finds its consensus sequence, where it cleaves and resolves cruciform DNA. The protein is Holliday junction branch migration complex subunit RuvB of Chlorobaculum parvum (strain DSM 263 / NCIMB 8327) (Chlorobium vibrioforme subsp. thiosulfatophilum).